Reading from the N-terminus, the 373-residue chain is StAR-related lipid transfer protein 7, mitochondrial (373 aa).

Residues 1 to 61 constitute a mitochondrion transit peptide; that stretch reads MFPRRPPATL…YSESSRCALL (61 aa). The stretch at 89–114 forms a coiled coil; the sequence is DEERIQEEELQRSINEMKRLEEMSNI. The region spanning 115–330 is the START domain; the sequence is FQSSGVENYP…LHMATLKAKN (216 aa). 2 disordered regions span residues 118–141 and 347–373; these read SGVE…KDKE and SSEA…IEYA.

In terms of processing, proteolytically cleaved by PARL. Expressed in epithelial cells of airways, peripheral bronchioles and alveoli, as well as in the basal cell layer of the epidermis (at protein level).

The protein resides in the mitochondrion. Its function is as follows. May play a protective role in mucosal tissues by preventing exaggerated allergic responses. This is StAR-related lipid transfer protein 7, mitochondrial (Stard7) from Mus musculus (Mouse).